The chain runs to 243 residues: uncharacterized protein (243 aa).

Residues 55–75 (IILIILLTIFMVISTLVIAFV) form a helical membrane-spanning segment.

It localises to the membrane. This is an uncharacterized protein from Rickettsia prowazekii (strain Madrid E).